Reading from the N-terminus, the 339-residue chain is DNA repair protein RAD51 homolog 1 (339 aa).

The segment at 1–23 (MAMQVQFEASTDTSAEEESFGPE) is disordered. The HhH domain maps to 48-77 (TVESVAHAPKKELLNIKGISEAKADKILAE). Position 127-134 (127-134 (GEFRTGKT)) interacts with ATP.

This sequence belongs to the RecA family. RAD51 subfamily. In terms of assembly, forms linear homooligomers, giving rise to a RAD51 nucleoprotein filament, which is essential for strand-pairing reactions during DNA recombination. Expressed at high levels in lymphoid and reproductive organs.

The protein resides in the nucleus. Its subcellular location is the cytoplasm. It localises to the chromosome. Its function is as follows. Plays an important role in homologous strand exchange, a key step in DNA repair through homologous recombination (HR). Binds to single-stranded DNA in an ATP-dependent manner to form nucleoprotein filaments which are essential for the homology search and strand exchange. Catalyzes the recognition of homology and strand exchange between homologous DNA partners to form a joint molecule between a processed DNA break and the repair template. Recruited to resolve stalled replication forks during replication stress. Also involved in interstrand cross-link repair. The polypeptide is DNA repair protein RAD51 homolog 1 (RAD51A) (Gallus gallus (Chicken)).